The chain runs to 86 residues: MIKNLSVRPSLIPREQRGSVESQVCYLTGRIKRLTEHLDLHGRDYSSQRGLWKIVGKRKRLLIYLFKKDRLRYKSLIGQLDMRGPR.

Belongs to the universal ribosomal protein uS15 family. As to quaternary structure, part of the 30S ribosomal subunit.

It localises to the plastid. It is found in the chloroplast. This is Small ribosomal subunit protein uS15c (rps15) from Cryptomeria japonica (Japanese cedar).